We begin with the raw amino-acid sequence, 567 residues long: Urease subunit alpha (567 aa).

The 440-residue stretch at 128-567 folds into the Urease domain; it reads GGVDTHVHYI…LPLAQRYHLF (440 aa). 3 residues coordinate Ni(2+): H133, H135, and K216. An N6-carboxylysine modification is found at K216. H218 is a binding site for substrate. Ni(2+) contacts are provided by H245 and H271. H319 (proton donor) is an active-site residue. A Ni(2+)-binding site is contributed by D359.

The protein belongs to the metallo-dependent hydrolases superfamily. Urease alpha subunit family. Heterotrimer of UreA (gamma), UreB (beta) and UreC (alpha) subunits. Three heterotrimers associate to form the active enzyme. Requires Ni cation as cofactor. Carboxylation allows a single lysine to coordinate two nickel ions.

It is found in the cytoplasm. The enzyme catalyses urea + 2 H2O + H(+) = hydrogencarbonate + 2 NH4(+). It participates in nitrogen metabolism; urea degradation; CO(2) and NH(3) from urea (urease route): step 1/1. This is Urease subunit alpha from Pseudoalteromonas translucida (strain TAC 125).